Here is a 96-residue protein sequence, read N- to C-terminus: Defensin-like protein 151 (96 aa).

The N-terminal stretch at 1-29 (MKKPSQLSATILTIFVILAIGVMVKETLG) is a signal peptide. 4 cysteine pairs are disulfide-bonded: C35–C88, C48–C68, C53–C82, and C57–C84.

It belongs to the DEFL family.

The protein resides in the secreted. This chain is Defensin-like protein 151 (LCR17), found in Arabidopsis thaliana (Mouse-ear cress).